A 184-amino-acid polypeptide reads, in one-letter code: Photosystem I assembly protein Ycf4 (184 aa).

A run of 2 helical transmembrane segments spans residues 25–45 and 57–77; these read ACILFFGSLGFFLVGISSYLG and ILFVPQGIVMCFYGIAGLFIS.

Belongs to the Ycf4 family.

It is found in the plastid. The protein localises to the chloroplast thylakoid membrane. Functionally, seems to be required for the assembly of the photosystem I complex. The chain is Photosystem I assembly protein Ycf4 from Cycas taitungensis (Prince sago).